Reading from the N-terminus, the 159-residue chain is Ribosomal RNA large subunit methyltransferase H (159 aa).

S-adenosyl-L-methionine contacts are provided by residues L76, G108, and 127–132; that span reads FGKLTM.

It belongs to the RNA methyltransferase RlmH family. Homodimer.

It localises to the cytoplasm. It catalyses the reaction pseudouridine(1915) in 23S rRNA + S-adenosyl-L-methionine = N(3)-methylpseudouridine(1915) in 23S rRNA + S-adenosyl-L-homocysteine + H(+). Specifically methylates the pseudouridine at position 1915 (m3Psi1915) in 23S rRNA. The chain is Ribosomal RNA large subunit methyltransferase H from Lacticaseibacillus casei (strain BL23) (Lactobacillus casei).